An 868-amino-acid chain; its full sequence is Monofunctional pimaradiene synthase (868 aa).

Residues aspartate 620, aspartate 624, asparagine 764, threonine 768, and glutamate 772 each coordinate Mg(2+).

It belongs to the terpene synthase family. Tpsd subfamily. Requires Mg(2+) as cofactor.

It carries out the reaction (+)-copalyl diphosphate = (-)-pimara-8(14),15-diene + diphosphate. It functions in the pathway terpene metabolism; oleoresin biosynthesis. Functionally, involved in defensive oleoresin formation in conifers in response to insect attack or other injury. Involved in diterpene (C20) olefins biosynthesis. Monofunctional enzyme lacking the DXDD motif in the class II active site relevant for the cyclization of geranylgeranyl diphosphate (GGPP). Requires (+)-copalyl diphosphate ((+)-CPP) as substrate, but no activity with GGPP or ent-CPP. Pimaradiene is the major products of the enzyme. This Pinus banksiana (Jack pine) protein is Monofunctional pimaradiene synthase.